The sequence spans 806 residues: Leucine--tRNA ligase (806 aa).

The 'HIGH' region motif lies at 40–51; sequence PYPSGAGLHVGH. The 'KMSKS' region motif lies at 576 to 580; it reads KMSKS. ATP is bound at residue K579.

It belongs to the class-I aminoacyl-tRNA synthetase family.

The protein localises to the cytoplasm. It carries out the reaction tRNA(Leu) + L-leucine + ATP = L-leucyl-tRNA(Leu) + AMP + diphosphate. The polypeptide is Leucine--tRNA ligase (Halalkalibacterium halodurans (strain ATCC BAA-125 / DSM 18197 / FERM 7344 / JCM 9153 / C-125) (Bacillus halodurans)).